Reading from the N-terminus, the 448-residue chain is MNRQLMEAYIRQKRASPGMVQASDLQINRPMSGMRSNSRELHAYDGPMQFISSPQNPDQILSNGSPGGITPVAMNTSRNHSNNMRSLSTINQEADLIEEISSHELEDEESSPVTVIEQHQQSASHSANSTQSQKPRARQHSFSDNLDEDDYTNRNVAGAAPVRPAGMASSPYKDATLEGSSNGTGNGTGGESEGDVIGNIDQFVMQPAPQGVLYKCRITRDRKGMDRGLFPIYYLHLERDYGKKIFLLGGRKRKKSKTSNYIVSCDPTDLSRNADGFCGKLRSNVFGTSFTVFDNGNKESTESPRLDLAVIIYDTNILGFKGPRNMTVILPGMTEDDQRVKISSADPKQQGILDLWKMKNMDNIVELHNKTPVWNDETQSYVLNFHGRVTQASVKNFQLVHDSDPEYIVMQFGRTSEDVFTMDYRYPLCAMQAFAIALSSFDGKIACE.

The disordered stretch occupies residues 103-195 (HELEDEESSP…NGTGGESEGD (93 aa)). Low complexity predominate over residues 118-133 (QHQQSASHSANSTQSQ). At S141 the chain carries Phosphoserine. Gly residues predominate over residues 182 to 191 (NGTGNGTGGE).

Belongs to the TUB family.

Its subcellular location is the cytoplasm. It is found in the nucleus. It localises to the cell projection. The protein resides in the cilium membrane. The protein localises to the rhabdomere. The polypeptide is Protein king tubby (Drosophila erecta (Fruit fly)).